The sequence spans 265 residues: 5'-nucleotidase SurE (265 aa).

Positions 8, 9, 40, and 98 each coordinate a divalent metal cation.

The protein belongs to the SurE nucleotidase family. A divalent metal cation is required as a cofactor.

The protein resides in the cytoplasm. The catalysed reaction is a ribonucleoside 5'-phosphate + H2O = a ribonucleoside + phosphate. Its function is as follows. Nucleotidase that shows phosphatase activity on nucleoside 5'-monophosphates. This chain is 5'-nucleotidase SurE, found in Trichormus variabilis (strain ATCC 29413 / PCC 7937) (Anabaena variabilis).